Reading from the N-terminus, the 998-residue chain is Protein Smaug (998 aa).

Over residues 1-37 the composition is skewed to polar residues; the sequence is MKYATGTDNAMTSGISGQTNSSNSASNEMQPTTSTPT. Disordered regions lie at residues 1–45, 50–69, and 329–370; these read MKYA…EATS, TATYANGNPNPSANPSQSQP, and LCPA…GSSS. Residues 329 to 338 show a composition bias toward low complexity; it reads LCPASGSRSS. Phosphoserine is present on residues S564 and S575. The interval 583–763 is interaction with cup; the sequence is EFKPNYIKFH…KDLKFKLSKM (181 aa). Residues 600–654 enclose the SAM domain; sequence GIGLWLKSLRLHKYIELFKNMTYEEMLLITEDFLQSVGVTKGASHKLALCIDKLK. Disordered regions lie at residues 773–892 and 943–977; these read HVKP…MQQM and NGSNDNLGLERNQQPQQQQQRKLSGGVSSAEQQPK. Polar residues-rich tracts occupy residues 801–822 and 854–864; these read KSGSNDRINNRKNSNDMLNFSL and HQPQYKSSSYP. Position 971 is a phosphoserine (S971).

This sequence belongs to the SMAUG family. Interacts with oskar (osk). Binds to the 3'-UTR of nos. Interacts with cup, which in turn recruits eIF4-E, leading to an indirect interaction between smg and eIF4-E that prevents mRNA translation.

Its subcellular location is the cytoplasm. Functionally, translation regulator that binds to the 3'-UTR of specific mRNAs such as nanos (nos) and prevent their translation. Prevents translation of unlocalized nos in the bulk cytoplasm via the recruitment of cup. The sequence is that of Protein Smaug from Drosophila sechellia (Fruit fly).